Reading from the N-terminus, the 1670-residue chain is Collagen alpha-3(IV) chain (1670 aa).

The signal sequence occupies residues 1–28 (MSARTAPRPQVLLLPLLLVLLAAAPAAS). Positions 29-42 (KGCVCKDKGQCFCD) are 7S domain. Residues 43 to 1438 (GAKGEKGEKG…KGKRGDSGSP (1396 aa)) are triple-helical region. Disordered stretches follow at residues 49-78 (GEKG…QGPK), 167-469 (LDAK…DGPK), and 502-1442 (GRQG…ATWT). Pro residues predominate over residues 176-200 (PGAPGPQGLPGPPGFPGPVGPPGPP). The segment covering 202–212 (FFGFPGAMGPR) has biased composition (low complexity). Positions 217 to 231 (HMGERVIGHKGERGV) are enriched in basic and acidic residues. Residues 242–251 (GTVIVTLTGP) are compositionally biased toward low complexity. Asn-253 is a glycosylation site (N-linked (GlcNAc...) asparagine). Basic and acidic residues predominate over residues 253–266 (NRTDLKGEKGDKGA). Residues 382-394 (SPGSSRPGLRGAP) show a composition bias toward low complexity. Residues 402–411 (SKGERGRPGK) are compositionally biased toward basic and acidic residues. Residues 415–428 (GTPGSPGCAGSPGL) show a composition bias toward low complexity. Composition is skewed to pro residues over residues 429–438 (PGSPGPPGPP), 598–618 (PGDP…PPGY), and 654–675 (VPGP…PPGI). The Cell attachment site signature appears at 791–793 (RGD). Residues 900 to 909 (IGPPGPPGNP) show a composition bias toward pro residues. Residues 974-987 (VPGMPGLKGLKGLP) show a composition bias toward low complexity. Positions 996–998 (RGD) match the Cell attachment site motif. Composition is skewed to low complexity over residues 1013–1025 (IPGS…MPGS), 1094–1105 (LGPAGPEGAPGS), and 1118–1133 (HGDL…LGPP). Positions 1135-1148 (IRGPPGLPGFPGSP) are enriched in pro residues. The Cell attachment site motif lies at 1154 to 1156 (RGD). Composition is skewed to low complexity over residues 1230–1250 (PGAI…RGSP) and 1290–1299 (PPGRLGAPGT). A Cell attachment site motif is present at residues 1306–1308 (RGD). The segment covering 1332-1341 (PPGPIGPKGP) has biased composition (pro residues). 2 short sequence motifs (cell attachment site) span residues 1345-1347 (RGD) and 1432-1434 (RGD). Residues 1427–1444 (GLKGKRGDSGSPATWTTR) are epitope recognized by Goodpasture antibodies. Residues 1445–1669 (GFVFTRHSQT…SRCQVCMKKR (225 aa)) enclose the Collagen IV NC1 domain. 6 cysteine pairs are disulfide-bonded: Cys-1460–Cys-1551, Cys-1493–Cys-1548, Cys-1505–Cys-1511, Cys-1570–Cys-1665, Cys-1604–Cys-1662, and Cys-1616–Cys-1622. Positions 1479–1557 (NQRAHGQDLG…CTVCEGPAIA (79 aa)) are required for the anti-angiogenic activity of tumstatin. Met-1533 participates in a covalent cross-link: S-Lysyl-methionine sulfilimine (Met-Lys) (interchain with K-1651). The segment at 1610-1628 (ASPFLECHGRGTCNYYSNS) is required for the anti-tumor cell activity of tumstatin. Residue Lys-1651 forms an S-Lysyl-methionine sulfilimine (Lys-Met) (interchain with M-1533) linkage.

Belongs to the type IV collagen family. As to quaternary structure, there are six type IV collagen isoforms, alpha 1(IV)-alpha 6(IV), each of which can form a triple helix structure with 2 other chains to generate type IV collagen network. The alpha 3(IV) chain forms a triple helical protomer with alpha 4(IV) and alpha 5(IV); this triple helical structure dimerizes through NC1-NC1 domain interactions such that the alpha 3(IV), alpha 4(IV) and alpha 5(IV) chains of one protomer connect with the alpha 5(IV), alpha 4(IV) and alpha 3(IV) chains of the opposite promoter, respectively. Interacts with ITGB3. Associates with LAMB2 at the neuromuscular junction and in GBM. Post-translationally, prolines at the third position of the tripeptide repeating unit (G-X-Y) are hydroxylated in some or all of the chains. In terms of processing, isoform 2 contains an additional N-linked glycosylation site. Type IV collagens contain numerous cysteine residues which are involved in inter- and intramolecular disulfide bonding. 12 of these, located in the NC1 domain, are conserved in all known type IV collagens. Post-translationally, the trimeric structure of the NC1 domains is stabilized by covalent bonds between Lys and Met residues. In terms of processing, phosphorylated. Thought to be phosphorylated by CERT, but CERT does not have kinase activity. Alpha 3 and alpha 4 type IV collagens are colocalized and present in kidney, eye, basement membranes of lens capsule, cochlea, lung, skeletal muscle, aorta, synaptic fibers, fetal kidney and fetal lung. PubMed:8083201 reports similar levels of expression of alpha 3 and alpha 4 type IV collagens in kidney, but PubMed:7523402 reports that in kidney levels of alpha 3 type IV collagen are significantly lower than those of alpha 4 type IV collagen. According to PubMed:8083201, alpha 3 type IV collagen is not detected in heart, brain, placenta, liver, pancreas, extrasynaptic muscle fibers, endoneurial and perineurial nerves, fetal brain, fetal heart and fetal liver. According to PubMed:7523402, alpha 3 type IV collagen is strongly expressed in pancreas, neuroretina and calvaria and not expressed in adrenal, ileum and skin. Isoform 1 and isoform 3 are strongly expressed in kidney, lung, suprarenal capsule, muscle and spleen, in each of these tissues isoform 1 is more abundant than isoform 3. Isoform 1 and isoform 3 are expressed at low levels in artery, fat, pericardium and peripherical nerve, but not in placenta, mesangium, skin, pleura and cultured umbilical endothelial cells.

Its subcellular location is the secreted. The protein localises to the extracellular space. It is found in the extracellular matrix. The protein resides in the basement membrane. Type IV collagen is the major structural component of glomerular basement membranes (GBM), forming a 'chicken-wire' meshwork together with laminins, proteoglycans and entactin/nidogen. Functionally, tumstatin, a cleavage fragment corresponding to the collagen alpha 3(IV) NC1 domain, possesses both anti-angiogenic and anti-tumor cell activity; these two anti-tumor properties may be regulated via RGD-independent ITGB3-mediated mechanisms. This chain is Collagen alpha-3(IV) chain (COL4A3), found in Homo sapiens (Human).